The sequence spans 304 residues: Ribosomal RNA small subunit methyltransferase H (304 aa).

S-adenosyl-L-methionine is bound by residues 36-38, Asp53, Phe79, Asp98, and Gln105; that span reads GGH.

The protein belongs to the methyltransferase superfamily. RsmH family.

The protein resides in the cytoplasm. It carries out the reaction cytidine(1402) in 16S rRNA + S-adenosyl-L-methionine = N(4)-methylcytidine(1402) in 16S rRNA + S-adenosyl-L-homocysteine + H(+). In terms of biological role, specifically methylates the N4 position of cytidine in position 1402 (C1402) of 16S rRNA. This is Ribosomal RNA small subunit methyltransferase H from Myxococcus xanthus (strain DK1622).